We begin with the raw amino-acid sequence, 230 residues long: Orotidine 5'-phosphate decarboxylase (230 aa).

Residues Asp10, Lys32, 59–68, Thr119, Arg180, Gln189, Gly209, and Arg210 contribute to the substrate site; that span reads DLKYHDIPNT. Lys61 acts as the Proton donor in catalysis.

This sequence belongs to the OMP decarboxylase family. Type 1 subfamily. In terms of assembly, homodimer.

The enzyme catalyses orotidine 5'-phosphate + H(+) = UMP + CO2. The protein operates within pyrimidine metabolism; UMP biosynthesis via de novo pathway; UMP from orotate: step 2/2. Functionally, catalyzes the decarboxylation of orotidine 5'-monophosphate (OMP) to uridine 5'-monophosphate (UMP). The polypeptide is Orotidine 5'-phosphate decarboxylase (Haemophilus ducreyi (strain 35000HP / ATCC 700724)).